Reading from the N-terminus, the 203-residue chain is Peptide deformylase (203 aa).

Residues C130 and H173 each coordinate Fe cation. E174 is an active-site residue. Residue H177 coordinates Fe cation.

It belongs to the polypeptide deformylase family. It depends on Fe(2+) as a cofactor.

The enzyme catalyses N-terminal N-formyl-L-methionyl-[peptide] + H2O = N-terminal L-methionyl-[peptide] + formate. Its function is as follows. Removes the formyl group from the N-terminal Met of newly synthesized proteins. Requires at least a dipeptide for an efficient rate of reaction. N-terminal L-methionine is a prerequisite for activity but the enzyme has broad specificity at other positions. The protein is Peptide deformylase of Streptococcus pneumoniae serotype 4 (strain ATCC BAA-334 / TIGR4).